A 217-amino-acid polypeptide reads, in one-letter code: Adenylate kinase (217 aa).

10-15 (GAGKGT) is an ATP binding site. The tract at residues 30–59 (STGDMFREAIKRGTPLGRQAEVYIKGGRLV) is NMP. AMP-binding positions include T31, R36, 57 to 59 (RLV), 85 to 88 (GFPR), and Q92. Positions 126–163 (GRRVCRQCGATYHVRYNPPAVPGKCDACGQDLVQRADD) are LID. Position 127 (R127) interacts with ATP. Positions 130 and 133 each coordinate Zn(2+). 136 to 137 (TY) provides a ligand contact to ATP. Residues C150 and C153 each contribute to the Zn(2+) site. Residues R160 and R171 each coordinate AMP. Q199 lines the ATP pocket.

Belongs to the adenylate kinase family. As to quaternary structure, monomer.

The protein resides in the cytoplasm. The catalysed reaction is AMP + ATP = 2 ADP. It participates in purine metabolism; AMP biosynthesis via salvage pathway; AMP from ADP: step 1/1. In terms of biological role, catalyzes the reversible transfer of the terminal phosphate group between ATP and AMP. Plays an important role in cellular energy homeostasis and in adenine nucleotide metabolism. The sequence is that of Adenylate kinase from Moorella thermoacetica (strain ATCC 39073 / JCM 9320).